A 57-amino-acid polypeptide reads, in one-letter code: Small ribosomal subunit protein bS21 (57 aa).

It belongs to the bacterial ribosomal protein bS21 family.

This Lysinibacillus sphaericus (strain C3-41) protein is Small ribosomal subunit protein bS21.